Here is a 217-residue protein sequence, read N- to C-terminus: Adapter protein MecA (217 aa).

It belongs to the MecA family. As to quaternary structure, homodimer.

In terms of biological role, enables the recognition and targeting of unfolded and aggregated proteins to the ClpC protease or to other proteins involved in proteolysis. The polypeptide is Adapter protein MecA (Listeria monocytogenes serovar 1/2a (strain ATCC BAA-679 / EGD-e)).